A 247-amino-acid chain; its full sequence is UPF0246 protein LCABL_22600 (247 aa).

It belongs to the UPF0246 family.

This chain is UPF0246 protein LCABL_22600, found in Lacticaseibacillus casei (strain BL23) (Lactobacillus casei).